The following is a 567-amino-acid chain: Potassium-transporting ATPase potassium-binding subunit (567 aa).

A run of 11 helical transmembrane segments spans residues 3–23 (FIGW…VKPL), 64–84 (LTFT…IYAV), 136–156 (ALTH…MALI), 179–199 (LYVL…QGMP), 254–274 (LSNF…TNVF), 285–305 (WAIL…AYWA), 330–350 (FGIV…CGAV), 357–376 (FTAL…EIIV), 421–441 (MLAI…AVVL), 473–495 (AFGG…MFVG), and 527–547 (GGLF…LTFF).

This sequence belongs to the KdpA family. In terms of assembly, the system is composed of three essential subunits: KdpA, KdpB and KdpC.

The protein localises to the cell inner membrane. Functionally, part of the high-affinity ATP-driven potassium transport (or Kdp) system, which catalyzes the hydrolysis of ATP coupled with the electrogenic transport of potassium into the cytoplasm. This subunit binds the periplasmic potassium ions and delivers the ions to the membrane domain of KdpB through an intramembrane tunnel. The protein is Potassium-transporting ATPase potassium-binding subunit of Rhodopseudomonas palustris (strain ATCC BAA-98 / CGA009).